Here is a 239-residue protein sequence, read N- to C-terminus: Ribosome assembly factor mrt4 (239 aa).

The protein belongs to the universal ribosomal protein uL10 family. Associates with the pre-60S ribosomal particle.

It localises to the nucleus. It is found in the nucleolus. The protein localises to the cytoplasm. In terms of biological role, component of the ribosome assembly machinery. Nuclear paralog of the ribosomal protein P0, it binds pre-60S subunits at an early stage of assembly in the nucleolus, and is replaced by P0 in cytoplasmic pre-60S subunits and mature 80S ribosomes. In Candida glabrata (strain ATCC 2001 / BCRC 20586 / JCM 3761 / NBRC 0622 / NRRL Y-65 / CBS 138) (Yeast), this protein is Ribosome assembly factor mrt4.